Here is a 62-residue protein sequence, read N- to C-terminus: Photosystem II reaction center protein Z (62 aa).

Helical transmembrane passes span 8–28 (SVFA…VVLA) and 41–61 (FSGA…NSLI).

It belongs to the PsbZ family. In terms of assembly, PSII is composed of 1 copy each of membrane proteins PsbA, PsbB, PsbC, PsbD, PsbE, PsbF, PsbH, PsbI, PsbJ, PsbK, PsbL, PsbM, PsbT, PsbY, PsbZ, Psb30/Ycf12, at least 3 peripheral proteins of the oxygen-evolving complex and a large number of cofactors. It forms dimeric complexes.

The protein localises to the plastid. The protein resides in the chloroplast thylakoid membrane. Functionally, may control the interaction of photosystem II (PSII) cores with the light-harvesting antenna, regulates electron flow through the 2 photosystem reaction centers. PSII is a light-driven water plastoquinone oxidoreductase, using light energy to abstract electrons from H(2)O, generating a proton gradient subsequently used for ATP formation. This Psilotum nudum (Whisk fern) protein is Photosystem II reaction center protein Z.